We begin with the raw amino-acid sequence, 286 residues long: Ribose-phosphate pyrophosphokinase (286 aa).

Residues 34–36 and 91–93 each bind ATP; these read DGE and RQH. Residues His-124 and Asp-161 each contribute to the Mg(2+) site. Lys-184 is a catalytic residue. D-ribose 5-phosphate contacts are provided by residues Arg-186, Asp-210, and 214–218; that span reads STGGT.

Belongs to the ribose-phosphate pyrophosphokinase family. Class III (archaeal) subfamily. As to quaternary structure, homodimer. It depends on Mg(2+) as a cofactor.

The protein resides in the cytoplasm. The enzyme catalyses D-ribose 5-phosphate + ATP = 5-phospho-alpha-D-ribose 1-diphosphate + AMP + H(+). It participates in metabolic intermediate biosynthesis; 5-phospho-alpha-D-ribose 1-diphosphate biosynthesis; 5-phospho-alpha-D-ribose 1-diphosphate from D-ribose 5-phosphate (route I): step 1/1. Functionally, involved in the biosynthesis of the central metabolite phospho-alpha-D-ribosyl-1-pyrophosphate (PRPP) via the transfer of pyrophosphoryl group from ATP to 1-hydroxyl of ribose-5-phosphate (Rib-5-P). The protein is Ribose-phosphate pyrophosphokinase of Thermoplasma volcanium (strain ATCC 51530 / DSM 4299 / JCM 9571 / NBRC 15438 / GSS1).